Consider the following 496-residue polypeptide: MLQPINVSMESLNLITLAPMLVAIAGGLIILILDLINKNLHKSLYVMLTILILVIDFGATLGLNVNERGFFDVMLIDGVSIVSQLLIIVASILFTPLALTSKRFHEYSYPEFFALFLFMVAGFQFMVASDNLILIFVGLETASLSLYTLIALHNRSNSYEAAVKYFTMGALAAAFFAMGSAVIYALTGSIELYRVADVLAARMGETGLMIAIFGSSVLLLVAFAFKLSLFPFHTWAPDVYEGASAPLAGYMSVVPKVAAFVVSIRIFGMYIDLGVEWVRVVILVLAVLTMTLANLMALVQEDVKRMLAYSSISHAGFIIAALALDTTEGTTAIFFYYGLFMFTNLGAFAMLWMSRHKNRRFNARFDHPYEKFAGFIKIMPMGAVIMAIFMLSLAGVPPFSIFWGKIYVMQAAVNSGYVWLAIVMGLNSAIAAYYYLKLVVYMFLKDPVKDVDTVYYNLSKPLMAVVGFAAVATIAAIFYVQPLVSYIYYMISASGY.

A run of 14 helical transmembrane segments spans residues 12 to 32, 43 to 63, 79 to 99, 108 to 128, 132 to 152, 166 to 186, 207 to 227, 257 to 277, 280 to 300, 306 to 326, 333 to 353, 383 to 403, 416 to 436, and 464 to 484; these read LNLI…IILI, SLYV…TLGL, VSIV…PLAL, SYPE…FMVA, LILI…LIAL, FTMG…IYAL, GLMI…AFKL, VAAF…GVEW, VVIL…ALVQ, MLAY…ALDT, IFFY…MLWM, AVIM…SIFW, GYVW…YYYL, and AVVG…QPLV.

The protein belongs to the complex I subunit 2 family. NDH-1 is composed of 14 different subunits. Subunits NuoA, H, J, K, L, M, N constitute the membrane sector of the complex.

The protein resides in the cell inner membrane. The enzyme catalyses a quinone + NADH + 5 H(+)(in) = a quinol + NAD(+) + 4 H(+)(out). In terms of biological role, NDH-1 shuttles electrons from NADH, via FMN and iron-sulfur (Fe-S) centers, to quinones in the respiratory chain. The immediate electron acceptor for the enzyme in this species is believed to be ubiquinone. Couples the redox reaction to proton translocation (for every two electrons transferred, four hydrogen ions are translocated across the cytoplasmic membrane), and thus conserves the redox energy in a proton gradient. This Sulfurovum sp. (strain NBC37-1) protein is NADH-quinone oxidoreductase subunit N.